The following is a 79-amino-acid chain: Acyl carrier protein (79 aa).

One can recognise a Carrier domain in the interval 2-77 (ENIEQRVKKI…QAIDYVNAHL (76 aa)). Residue S37 is modified to O-(pantetheine 4'-phosphoryl)serine.

Belongs to the acyl carrier protein (ACP) family. In terms of processing, 4'-phosphopantetheine is transferred from CoA to a specific serine of apo-ACP by AcpS. This modification is essential for activity because fatty acids are bound in thioester linkage to the sulfhydryl of the prosthetic group.

The protein localises to the cytoplasm. It functions in the pathway lipid metabolism; fatty acid biosynthesis. Functionally, carrier of the growing fatty acid chain in fatty acid biosynthesis. The polypeptide is Acyl carrier protein (Azoarcus sp. (strain BH72)).